Here is a 652-residue protein sequence, read N- to C-terminus: Adhesion G protein-coupled receptor E3 (652 aa).

The N-terminal stretch at 1–21 (MQGPLLLPGLCFLLSLFGAVT) is a signal peptide. Over 22 to 357 (QKTKTSCAKC…TSQEEDPVLT (336 aa)) the chain is Extracellular. In terms of domain architecture, EGF-like 1 spans 24–66 (TKTSCAKCPPNASCVNNTHCTCNHGYTSGSGQKLFTFPLETCN). 6 cysteine pairs are disulfide-bonded: cysteine 28–cysteine 37, cysteine 31–cysteine 43, cysteine 45–cysteine 65, cysteine 71–cysteine 85, cysteine 79–cysteine 94, and cysteine 96–cysteine 117. Residues asparagine 34 and asparagine 39 are each glycosylated (N-linked (GlcNAc...) asparagine). The region spanning 67 to 118 (DINECTPPYSVYCGFNAVCYNVEGSFYCQCVPGYRLHSGNEQFSNSNENTCQ) is the EGF-like 2; calcium-binding domain. N-linked (GlcNAc...) asparagine glycans are attached at residues asparagine 145, asparagine 189, asparagine 202, asparagine 250, asparagine 279, asparagine 327, and asparagine 334. The GAIN-B domain occupies 183–351 (KVLKIQNDSV…AVLMALTSQE (169 aa)). 2 disulfides stabilise this stretch: cysteine 304–cysteine 333 and cysteine 321–cysteine 335. The GPS stretch occupies residues 304 to 351 (CVYWKSTGQGSQWSRDGCFLIHVNKSHTMCNCSHLSSFAVLMALTSQE). The chain crosses the membrane as a helical span at residues 358–378 (VITYVGLSVSLLCLLLAALTF). At 379-389 (LLCKAIRNTST) the chain is on the cytoplasmic side. A helical membrane pass occupies residues 390 to 410 (SLHLQLSLCLFLAHLLFLVGI). Topologically, residues 411-416 (DRTEPK) are extracellular. A helical transmembrane segment spans residues 417–437 (VLCSIIAGALHYLYLAAFTWM). Residues 438–464 (LLEGVHLFLTARNLTVVNYSSINRLMK) are Cytoplasmic-facing. A helical membrane pass occupies residues 465–485 (WIMFPVGYGVPAVTVAISAAS). At 486–508 (WPHLYGTADRCWLHLDQGFMWSF) the chain is on the extracellular side. A helical transmembrane segment spans residues 509-529 (LGPVCAIFSANLVLFILVFWI). At 530-557 (LKRKLSSLNSEVSTIQNTRMLAFKATAQ) the chain is on the cytoplasmic side. Residues 558 to 578 (LFILGCTWCLGLLQVGPAAQV) form a helical membrane-spanning segment. Topologically, residues 579-580 (MA) are extracellular. A helical transmembrane segment spans residues 581–601 (YLFTIINSLQGFFIFLVYCLL). Topologically, residues 602-652 (SQQVQKQYQKWFREIVKSKSESETYTLSSKMGPDSKPSEGDVFPGQVKRKY) are cytoplasmic. A disordered region spans residues 621-652 (SESETYTLSSKMGPDSKPSEGDVFPGQVKRKY).

The protein belongs to the G-protein coupled receptor 2 family. Adhesion G-protein coupled receptor (ADGR) subfamily. As to quaternary structure, forms a heterodimer, consisting of a large extracellular region (alpha subunit) non-covalently linked to a seven-transmembrane moiety (beta subunit). Post-translationally, proteolytically cleaved into 2 subunits, an extracellular alpha subunit and a seven-transmembrane subunit. As to expression, displays a predominantly leukocyte-restricted expression, with highest levels in neutrophils, monocytes and macrophages.

The protein localises to the cell membrane. The protein resides in the secreted. Its function is as follows. Orphan receptor that may play a role myeloid-myeloid interactions during immune and inflammatory responses. A ligand for the soluble form of this receptor is present at the surface of monocytes-derived macrophages and activated neutrophils. The sequence is that of Adhesion G protein-coupled receptor E3 from Homo sapiens (Human).